Reading from the N-terminus, the 241-residue chain is DNA repair protein RecO (241 aa).

This sequence belongs to the RecO family.

Its function is as follows. Involved in DNA repair and RecF pathway recombination. The sequence is that of DNA repair protein RecO from Rickettsia canadensis (strain McKiel).